Consider the following 693-residue polypeptide: Golgin subfamily A member 6A (693 aa).

Residues 14–611 adopt a coiled-coil conformation; the sequence is LEESRQNKLA…KLLELQELVL (598 aa). Disordered regions lie at residues 20 to 69, 497 to 547, and 661 to 693; these read NKLA…PGDS, LPGE…GTEQ, and NVEP…MQDT. Over residues 54 to 69 the composition is skewed to polar residues; that stretch reads SPETTTSGGCHSPGDS. The segment covering 537–547 has biased composition (basic and acidic residues); sequence LPKEKADGTEQ. Polar residues predominate over residues 676–693; the sequence is DNPTVQQIVQLSPVMQDT.

This sequence belongs to the GOLGA6 family. Highly expressed in seminiferous tubes in testis. Highly expressed in spermatids, barely detectable in late pachytene spermatocytes, and not detectable in spermatogonia. Detected at intermediate levels in pancreas and lymph nodes, and at much lower levels in spleen, peripheral blood leukocytes, skeletal muscle, liver, lung, placenta, brain and heart.

This Homo sapiens (Human) protein is Golgin subfamily A member 6A (GOLGA6A).